We begin with the raw amino-acid sequence, 477 residues long: Phosphatidylinositol 4-kinase type 2-beta (477 aa).

The interval 1–80 (MPEPPRDIMA…EDRSISASLS (80 aa)) is disordered. Serine 45 carries the phosphoserine modification. Residues 116-447 (GVFPERISQG…AQMPCVIVEC (332 aa)) enclose the PI3K/PI4K catalytic domain. The interval 122 to 128 (ISQGSSG) is G-loop. ATP-binding residues include serine 129 and lysine 144. The interval 149–151 (EPY) is important for substrate binding. Positions 157–170 (KWTKYVHKVCCPCC) are important for interaction with membranes. ATP contacts are provided by residues 253–256 (QLFV) and 267–268 (RR). An important for interaction with membranes region spans residues 260 to 268 (KEAEYWLRR). The catalytic loop stretch occupies residues 297-305 (RNTDRGNDN). The activation loop stretch occupies residues 338 to 358 (AIDNGLAFPFKHPDEWRAYPF). Aspartate 340 contacts ATP. Positions 353 to 362 (WRAYPFHWAW) are important for interaction with membranes.

Belongs to the PI3/PI4-kinase family. Type II PI4K subfamily.

Its subcellular location is the cytoplasm. It is found in the cytosol. It localises to the golgi apparatus membrane. The protein resides in the endoplasmic reticulum membrane. The protein localises to the cell membrane. Its subcellular location is the early endosome membrane. The enzyme catalyses a 1,2-diacyl-sn-glycero-3-phospho-(1D-myo-inositol) + ATP = a 1,2-diacyl-sn-glycero-3-phospho-(1D-myo-inositol 4-phosphate) + ADP + H(+). Its function is as follows. Together with PI4K2A and the type III PI4Ks (PIK4CA and PIK4CB) it contributes to the overall PI4-kinase activity of the cell. This contribution may be especially significant in plasma membrane, endosomal and Golgi compartments. The phosphorylation of phosphatidylinositol (PI) to PI4P is the first committed step in the generation of phosphatidylinositol 4,5-bisphosphate (PIP2), a precursor of the second messenger inositol 1,4,5-trisphosphate (InsP3). Contributes to the production of InsP3 in stimulated cells and is likely to be involved in the regulation of vesicular trafficking. The sequence is that of Phosphatidylinositol 4-kinase type 2-beta (Pi4k2b) from Rattus norvegicus (Rat).